Consider the following 705-residue polypeptide: Elongation factor G (705 aa).

In terms of domain architecture, tr-type G spans 8-290 (HRYRNIGIMA…GVIHLLPSPA (283 aa)). Residues 17–24 (AHIDAGKT), 88–92 (DTPGH), and 142–145 (NKMD) each bind GTP.

Belongs to the TRAFAC class translation factor GTPase superfamily. Classic translation factor GTPase family. EF-G/EF-2 subfamily.

Its subcellular location is the cytoplasm. In terms of biological role, catalyzes the GTP-dependent ribosomal translocation step during translation elongation. During this step, the ribosome changes from the pre-translocational (PRE) to the post-translocational (POST) state as the newly formed A-site-bound peptidyl-tRNA and P-site-bound deacylated tRNA move to the P and E sites, respectively. Catalyzes the coordinated movement of the two tRNA molecules, the mRNA and conformational changes in the ribosome. The protein is Elongation factor G of Xylella fastidiosa (strain 9a5c).